The chain runs to 227 residues: MASSIFRDLPAEHPRHLIPALCAQFYNLGWVTGTGGGMSIKYNNEIYIAPSGVQKERMQPEDLFVQDIDGKDLQLPPEIKGLKKSQCTPLFMLAYRHRNAAAVIHTHSQHAVMATLLWPGKTFRCTHLEMIKGVYDEADKRYLRYDEQLVVPIIENTPHERDLADSMYAAMMEYPGCSAVLVRRHGVYVWGQTWEKTKTMSECYDYLFSIAVQMKTAGLNPEKFENA.

C87 contributes to the substrate binding site. Zn(2+) contacts are provided by H105 and H107. The active-site Proton donor/acceptor is the E129. H185 is a binding site for Zn(2+).

Belongs to the aldolase class II family. MtnB subfamily. Zn(2+) is required as a cofactor.

Its subcellular location is the cytoplasm. It carries out the reaction 5-(methylsulfanyl)-D-ribulose 1-phosphate = 5-methylsulfanyl-2,3-dioxopentyl phosphate + H2O. Its pathway is amino-acid biosynthesis; L-methionine biosynthesis via salvage pathway; L-methionine from S-methyl-5-thio-alpha-D-ribose 1-phosphate: step 2/6. Functionally, catalyzes the dehydration of methylthioribulose-1-phosphate (MTRu-1-P) into 2,3-diketo-5-methylthiopentyl-1-phosphate (DK-MTP-1-P). In Drosophila mojavensis (Fruit fly), this protein is Probable methylthioribulose-1-phosphate dehydratase.